The primary structure comprises 217 residues: MHRQSVARLTRQCHGLPLVELPPPYLAPSLHFSLIRTPVQCSSFSSTAVVAGRGRDLNKTRGVSAIHRTGPRFKLGVSKYPLPKPVSPAALEKREATPNHGLWGFFPRDRSALSTPEYDIAHGRSWSIQELREKSWEDLHCLWWVCVKERNRIATSNLERQRLKAGYGEWEARERDRTIRITQNGIKHVLRERWYAWEDAKRLYKKGYRPQDEENQE.

This sequence belongs to the universal ribosomal protein uL29 family. Component of the mitochondrial large ribosomal subunit. Mature mitochondrial ribosomes consist of a small (37S) and a large (54S) subunit. The 37S subunit contains at least 33 different proteins and 1 molecule of RNA (15S). The 54S subunit contains at least 45 different proteins and 1 molecule of RNA (21S).

It localises to the mitochondrion. This is Large ribosomal subunit protein uL29m (mrpl4) from Aspergillus fumigatus (strain ATCC MYA-4609 / CBS 101355 / FGSC A1100 / Af293) (Neosartorya fumigata).